We begin with the raw amino-acid sequence, 347 residues long: Ion-translocating oxidoreductase complex subunit D (347 aa).

The next 4 membrane-spanning stretches (helical) occupy residues 15-35, 36-56, 84-104, and 114-134; these read IMFLVIVACLPGIFAKYYFFG, IGTLIQIFFSIFISLVLEIII, IPPLLPWWMTSIGLFFAIVVA, and NIFNPAMVGYAVLLISFPVYM. Thr182 is subject to FMN phosphoryl threonine. 5 helical membrane passes run 217–237, 239–259, 261–281, 289–309, and 315–335; these read CINISFFLGGIFLLFTKIICW, IPISFLSSLGMLSIITYFYSK, LFMSPQVHFFSGGTMICAFFI, ACNNVGKIVFGIIIGFLVWII, and YPDAIAFSVLFANMTVPLVDY.

The protein belongs to the NqrB/RnfD family. As to quaternary structure, the complex is composed of six subunits: RnfA, RnfB, RnfC, RnfD, RnfE and RnfG. FMN is required as a cofactor.

The protein localises to the cell inner membrane. Functionally, part of a membrane-bound complex that couples electron transfer with translocation of ions across the membrane. The chain is Ion-translocating oxidoreductase complex subunit D from Buchnera aphidicola subsp. Acyrthosiphon pisum (strain 5A).